The sequence spans 292 residues: Elongation factor Ts (292 aa).

The segment at 79 to 82 (TDFV) is involved in Mg(2+) ion dislocation from EF-Tu.

It belongs to the EF-Ts family.

Its subcellular location is the cytoplasm. Its function is as follows. Associates with the EF-Tu.GDP complex and induces the exchange of GDP to GTP. It remains bound to the aminoacyl-tRNA.EF-Tu.GTP complex up to the GTP hydrolysis stage on the ribosome. The protein is Elongation factor Ts of Xylella fastidiosa (strain 9a5c).